The primary structure comprises 263 residues: LOB domain-containing protein 41 (263 aa).

Residues M3 to V109 enclose the LOB domain. The tract at residues T162–S204 is disordered. 2 stretches are compositionally biased toward basic and acidic residues: residues S169–H178 and A190–E200.

Belongs to the LOB domain-containing protein family. As to expression, expressed in young shoots, roots, stems, leaves and flowers.

The polypeptide is LOB domain-containing protein 41 (LBD41) (Arabidopsis thaliana (Mouse-ear cress)).